The primary structure comprises 114 residues: MSEKPREIKTRFPVARIKKLMQSDDDIGKVAQATPTAVAKALELFMISLIEETCNQARMRNSKRVSPSHLKQAVLETEQFDFLQDIVSKHPDAVAPATGEEEQPKRRGRKPAQE.

The interval 91 to 114 (PDAVAPATGEEEQPKRRGRKPAQE) is disordered.

Heterotetramer. Consists of four subunits: POL2, DPB2, DPB3 and DPB4.

Its subcellular location is the nucleus. Functionally, as accessory component of the DNA polymerase epsilon (DNA polymerase II) participates in chromosomal DNA replication. This chain is DNA polymerase epsilon subunit C (DPB3), found in Yarrowia lipolytica (strain CLIB 122 / E 150) (Yeast).